We begin with the raw amino-acid sequence, 110 residues long: Small ribosomal subunit protein bS16 (110 aa).

A disordered region spans residues 84–110; that stretch reads KREARNNPEKAVPRKERKAAAEAAAKK.

The protein belongs to the bacterial ribosomal protein bS16 family.

The polypeptide is Small ribosomal subunit protein bS16 (Rhodopseudomonas palustris (strain BisB18)).